Consider the following 510-residue polypeptide: Thermostable carboxypeptidase 1 (510 aa).

A Peptidase M32 domain is found at 3–506; sequence PEAAYQNLLE…FLAYLEKKYA (504 aa). The short motif at 245 to 247 is the HPF element; the sequence is HPF. Residues 255–259 carry the DXRXT motif; sequence DVRIT. Position 276 (His-276) interacts with Zn(2+). Positions 276–280 match the HEXXH motif; that stretch reads HEMGH. Catalysis depends on Glu-277, which acts as the Proton donor/acceptor. Residues His-280 and Glu-306 each contribute to the Zn(2+) site. The HES/GQ signature appears at 305–308; the sequence is HESQ. The short motif at 357-362 is the I/NRXXA/SD element; it reads IRVEAD. The short motif at 412-419 is the GXXQDXHW element; that stretch reads GVMQDVHW.

It belongs to the peptidase M32 family. In terms of assembly, homodimer. Zn(2+) serves as cofactor.

It carries out the reaction Release of a C-terminal amino acid with broad specificity, except for -Pro.. In terms of biological role, broad specificity carboxypetidase that releases amino acids sequentially from the C-terminus, including neutral, aromatic, polar and basic residues, but not Pro. Has lower activity with substrates ending with Gly or Glu. This is Thermostable carboxypeptidase 1 from Thermus thermophilus (strain ATCC 27634 / DSM 579 / HB8).